A 197-amino-acid chain; its full sequence is Protein jagunal (197 aa).

The Cytoplasmic portion of the chain corresponds to 1–39 (MATRGGPMVAGTDGNDFEFRQRVAGTYQISLLNKSRLKY). The chain crosses the membrane as a helical span at residues 40–60 (CIFFHALLFFVMLAKLTSDIL). The Lumenal segment spans residues 61–78 (DRLDIFVLEIEELEVPSP). The helical transmembrane segment at 79 to 99 (LWWEYVWAGSLLTSFLGLSAA) threads the bilayer. The Cytoplasmic segment spans residues 100 to 109 (RGNKVREMQK). A helical transmembrane segment spans residues 110–130 (YMIAILVFAILPLLYCFAYYF). Residues 131-159 (SDVWEFATMDKSVELDETDIFIWRGYPYG) are Lumenal-facing. Residues 160 to 180 (VFWYAFCFVGFQVHGFTLYFA) traverse the membrane as a helical segment. At 181–197 (YNLVKVWKARTATRKFQ) the chain is on the cytoplasmic side.

It belongs to the jagunal family.

Its subcellular location is the endoplasmic reticulum membrane. Functionally, required for endoplasmic reticulum organization and proper vesicular traffic during vitellogenesis. Required for oocyte and bristle growth. The polypeptide is Protein jagunal (Drosophila pseudoobscura pseudoobscura (Fruit fly)).